Reading from the N-terminus, the 527-residue chain is Glutamate--cysteine ligase (527 aa).

This sequence belongs to the glutamate--cysteine ligase type 1 family. Type 1 subfamily.

The catalysed reaction is L-cysteine + L-glutamate + ATP = gamma-L-glutamyl-L-cysteine + ADP + phosphate + H(+). It participates in sulfur metabolism; glutathione biosynthesis; glutathione from L-cysteine and L-glutamate: step 1/2. The sequence is that of Glutamate--cysteine ligase from Pseudomonas aeruginosa (strain ATCC 15692 / DSM 22644 / CIP 104116 / JCM 14847 / LMG 12228 / 1C / PRS 101 / PAO1).